A 167-amino-acid chain; its full sequence is Ribosome maturation factor RimP (167 aa).

This sequence belongs to the RimP family.

Its subcellular location is the cytoplasm. Its function is as follows. Required for maturation of 30S ribosomal subunits. The polypeptide is Ribosome maturation factor RimP (Streptomyces griseus subsp. griseus (strain JCM 4626 / CBS 651.72 / NBRC 13350 / KCC S-0626 / ISP 5235)).